Reading from the N-terminus, the 519-residue chain is uncharacterized protein (519 aa).

Positions 477–486 (IKRERAHVTQ) are enriched in basic residues. The segment at 477–519 (IKRERAHVTQRNKPPPSGGDTAVAEGFEPPDGVSRLSLSRRVH) is disordered.

This is an uncharacterized protein from Mycobacterium tuberculosis (strain ATCC 25618 / H37Rv).